Here is a 1113-residue protein sequence, read N- to C-terminus: Carbamoyl phosphate synthase large chain (1113 aa).

The interval 1 to 407 (MPKRSDINHV…ALNKALRSLE (407 aa)) is carboxyphosphate synthetic domain. Positions 134, 174, 180, 181, 213, 215, 220, 246, 247, 248, 290, and 304 each coordinate ATP. The ATP-grasp 1 domain occupies 138 to 333 (KDIVTTIGGE…IAKMAAKLAI (196 aa)). Gln290, Glu304, and Asn306 together coordinate Mg(2+). The Mn(2+) site is built by Gln290, Glu304, and Asn306. Residues 408-565 (TKQQGFWTKP…ELDPAAESEV (158 aa)) form an oligomerization domain region. A carbamoyl phosphate synthetic domain region spans residues 566 to 967 (APQTEREKVL…AYAKAEAGAF (402 aa)). The ATP-grasp 2 domain maps to 695–886 (GALLNREQLP…LAKAASRIAV (192 aa)). Residues Arg731, Arg770, Leu772, Glu777, Gly802, Ile803, His804, Ser805, Gln845, and Glu857 each contribute to the ATP site. Mg(2+)-binding residues include Gln845, Glu857, and Asn859. The Mn(2+) site is built by Gln845, Glu857, and Asn859. Residues 968–1113 (GALPTEGTVF…LQELDHAVKA (146 aa)) form the MGS-like domain. Residues 968–1113 (GALPTEGTVF…LQELDHAVKA (146 aa)) form an allosteric domain region.

It belongs to the CarB family. As to quaternary structure, composed of two chains; the small (or glutamine) chain promotes the hydrolysis of glutamine to ammonia, which is used by the large (or ammonia) chain to synthesize carbamoyl phosphate. Tetramer of heterodimers (alpha,beta)4. Requires Mg(2+) as cofactor. Mn(2+) serves as cofactor.

It catalyses the reaction hydrogencarbonate + L-glutamine + 2 ATP + H2O = carbamoyl phosphate + L-glutamate + 2 ADP + phosphate + 2 H(+). The catalysed reaction is hydrogencarbonate + NH4(+) + 2 ATP = carbamoyl phosphate + 2 ADP + phosphate + 2 H(+). Its pathway is amino-acid biosynthesis; L-arginine biosynthesis; carbamoyl phosphate from bicarbonate: step 1/1. The protein operates within pyrimidine metabolism; UMP biosynthesis via de novo pathway; (S)-dihydroorotate from bicarbonate: step 1/3. Its function is as follows. Large subunit of the glutamine-dependent carbamoyl phosphate synthetase (CPSase). CPSase catalyzes the formation of carbamoyl phosphate from the ammonia moiety of glutamine, carbonate, and phosphate donated by ATP, constituting the first step of 2 biosynthetic pathways, one leading to arginine and/or urea and the other to pyrimidine nucleotides. The large subunit (synthetase) binds the substrates ammonia (free or transferred from glutamine from the small subunit), hydrogencarbonate and ATP and carries out an ATP-coupled ligase reaction, activating hydrogencarbonate by forming carboxy phosphate which reacts with ammonia to form carbamoyl phosphate. The polypeptide is Carbamoyl phosphate synthase large chain (Corynebacterium glutamicum (strain ATCC 13032 / DSM 20300 / JCM 1318 / BCRC 11384 / CCUG 27702 / LMG 3730 / NBRC 12168 / NCIMB 10025 / NRRL B-2784 / 534)).